The sequence spans 488 residues: Probable indole-3-acetic acid-amido synthetase GH3.6 (488 aa).

Belongs to the IAA-amido conjugating enzyme family. As to expression, expressed in roots and callus.

Functionally, may catalyze the synthesis of indole-3-acetic acid (IAA)-amino acid conjugates, providing a mechanism for the plant to cope with the presence of excess auxin. The sequence is that of Probable indole-3-acetic acid-amido synthetase GH3.6 (GH3.6) from Oryza sativa subsp. japonica (Rice).